A 162-amino-acid polypeptide reads, in one-letter code: Protein A49R (162 aa).

Belongs to the poxviridae A49 protein family. In terms of assembly, interacts with host BTRC; this interaction inhibits NF-kappa-B activation.

The protein localises to the host cytoplasm. It localises to the host nucleus. Plays a role in the inhibition of host NF-kappa-B activation. Interacts with host BTRC and thereby diminishes ubiquitination of NF-kappa-B inhibitor alpha/NFKBIA. This stabilizes NFKBIA and its interaction with NF-kappaB, so retaining p65/RELA in the cytoplasm and preventing NF-kappa-B-dependent gene expression. This Bos taurus (Bovine) protein is Protein A49R.